A 299-amino-acid polypeptide reads, in one-letter code: ATP phosphoribosyltransferase (299 aa).

It belongs to the ATP phosphoribosyltransferase family. Long subfamily. Equilibrium between an active dimeric form, an inactive hexameric form and higher aggregates. Interconversion between the various forms is largely reversible and is influenced by the natural substrates and inhibitors of the enzyme. Requires Mg(2+) as cofactor.

Its subcellular location is the cytoplasm. The catalysed reaction is 1-(5-phospho-beta-D-ribosyl)-ATP + diphosphate = 5-phospho-alpha-D-ribose 1-diphosphate + ATP. Its pathway is amino-acid biosynthesis; L-histidine biosynthesis; L-histidine from 5-phospho-alpha-D-ribose 1-diphosphate: step 1/9. Its activity is regulated as follows. Feedback inhibited by histidine. Catalyzes the condensation of ATP and 5-phosphoribose 1-diphosphate to form N'-(5'-phosphoribosyl)-ATP (PR-ATP). Has a crucial role in the pathway because the rate of histidine biosynthesis seems to be controlled primarily by regulation of HisG enzymatic activity. In Buchnera aphidicola subsp. Schlechtendalia chinensis, this protein is ATP phosphoribosyltransferase.